Here is a 666-residue protein sequence, read N- to C-terminus: Threonine--tRNA ligase (666 aa).

The region spanning 7 to 70 is the TGS domain; that stretch reads QQVTLTVTLP…TADCTAEIIT (64 aa). The tract at residues 253 to 555 is catalytic; that stretch reads DHRKLGTELE…LIEHTAGNFP (303 aa). Zn(2+)-binding residues include cysteine 351, histidine 402, and histidine 532.

Belongs to the class-II aminoacyl-tRNA synthetase family. In terms of assembly, homodimer. The cofactor is Zn(2+).

It localises to the cytoplasm. It catalyses the reaction tRNA(Thr) + L-threonine + ATP = L-threonyl-tRNA(Thr) + AMP + diphosphate + H(+). In terms of biological role, catalyzes the attachment of threonine to tRNA(Thr) in a two-step reaction: L-threonine is first activated by ATP to form Thr-AMP and then transferred to the acceptor end of tRNA(Thr). Also edits incorrectly charged L-seryl-tRNA(Thr). The protein is Threonine--tRNA ligase of Chlorobium phaeovibrioides (strain DSM 265 / 1930) (Prosthecochloris vibrioformis (strain DSM 265)).